Here is a 378-residue protein sequence, read N- to C-terminus: MSDTDNSAEMPARCPSPNPAPGAKQEPPNSGITISLLEIGSLPTVCYHSFPPPKNSICPVEKRGRVQKFSNLLKDVKDVLKNIAGVEEKSTVGEPFDDAYIPEDLSELNVRGVEKKNKIRFKDDLFIHFDPEREQNTMKQMLLKNQSAKNMVPKFARDLCNAEETRGFDGMLLSVKRPRNGSLHLRGEYRKLRNNMEQLLQEADHWSKQHNELSELMRSYQECQNETQETTDKDRACLQNQPNNGLSTKQKLEEQVKKLSHDTHALHLIAALLENECQVLQQRVDILKDFHLHEAGLGHEKPLQMSCEQDKKCPKLAEADKTDAFKHTTRATEGTIRKPKILRSPDVCFTKKARNNRFNARVAKKSLVGKRRTVSSFR.

The disordered stretch occupies residues 1–31 (MSDTDNSAEMPARCPSPNPAPGAKQEPPNSG). Ser106 carries the phosphoserine modification. An interaction with PPP1CC isoform gamma-2 region spans residues 116–122 (KNKIRFK). A helix-loop-helix motif region spans residues 116–127 (KNKIRFKDDLFI). The tract at residues 128-193 (HFDPEREQNT…HLRGEYRKLR (66 aa)) is basic motif. Residues 182–233 (SLHLRGEYRKLRNNMEQLLQEADHWSKQHNELSELMRSYQECQNETQETTDK) adopt a coiled-coil conformation. Ser207 bears the Phosphoserine mark. Residues 252–273 (LEEQVKKLSHDTHALHLIAALL) form a leucine-zipper region.

In terms of assembly, interacts with PPP1CC isoform gamma-2. This interaction can prevent SPZ1 binding to the E-box and inhibits PPP1CC activity. In terms of processing, phosphorylated by MAPK1/ERK2 and MAPK3/ERK1. In terms of tissue distribution, expressed specifically in the testis and epidydimis. In the testis expressed in both germ cells and somatic cells (Sertoli and Leydig cells). Expressed in several tumor cell lines.

It is found in the cytoplasm. It localises to the nucleus. Its function is as follows. Transcription factor that binds to the DNA sequence 5'-CANNTG-3'(E box) and the G-box motif. Directly binds to a guanine-rich region of the PCNA promoter and up-regulates its expression which in turn induces cell transformation and tumor formation. May play an important role in the regulation of cell proliferation and differentiation during spermatogenesis. This Mus musculus (Mouse) protein is Spermatogenic leucine zipper protein 1 (Spz1).